A 72-amino-acid polypeptide reads, in one-letter code: UPF0352 protein CGSHiGG_07710 (72 aa).

It belongs to the UPF0352 family.

The sequence is that of UPF0352 protein CGSHiGG_07710 from Haemophilus influenzae (strain PittGG).